Consider the following 123-residue polypeptide: Small ribosomal subunit protein uS13 (123 aa).

It belongs to the universal ribosomal protein uS13 family. Part of the 30S ribosomal subunit. Forms a loose heterodimer with protein S19. Forms two bridges to the 50S subunit in the 70S ribosome.

Located at the top of the head of the 30S subunit, it contacts several helices of the 16S rRNA. In the 70S ribosome it contacts the 23S rRNA (bridge B1a) and protein L5 of the 50S subunit (bridge B1b), connecting the 2 subunits; these bridges are implicated in subunit movement. Contacts the tRNAs in the A and P-sites. This is Small ribosomal subunit protein uS13 from Neorickettsia sennetsu (strain ATCC VR-367 / Miyayama) (Ehrlichia sennetsu).